The chain runs to 501 residues: Histone deacetylase 19 (501 aa).

The segment at 17-329 (RKVCYFYDPE…WCYETGVALG (313 aa)) is histone deacetylase. His149 (proton donor/acceptor) is an active-site residue. Zn(2+) is bound by residues Asp184, His186, and Asp272. Residues 383–501 (HAPSVPFQER…GAEQAFPPKT (119 aa)) are disordered. Residues 397-407 (ETPEVDEDQED) show a composition bias toward acidic residues. A Phosphoserine modification is found at Ser416. Composition is skewed to basic and acidic residues over residues 422–457 (DDRKPIPSRVKREAVEPDTKDKDGLKGIMERGKGCE) and 479–488 (ASVKMEEEGT).

The protein belongs to the histone deacetylase family. HD type 1 subfamily. As to quaternary structure, interacts with SIN3, SAP18 and TPR1. Interacts with CDKE-1, MED14 and LUG. Interacts with TPL. Interacts with AHL22. Requires Zn(2+) as cofactor. In terms of tissue distribution, highly expressed in leaves, stems, flowers and young siliques.

The protein resides in the nucleus. It carries out the reaction N(6)-acetyl-L-lysyl-[histone] + H2O = L-lysyl-[histone] + acetate. Its function is as follows. Responsible for the deacetylation of lysine residues on the N-terminal part of the core histones (H2A, H2B, H3 and H4). Histone deacetylation gives a tag for epigenetic repression and plays an important role in transcriptional regulation, cell cycle progression and developmental events. Histone deacetylases act via the formation of large multiprotein complexes. HDA19 is involved in jasmonic acid and ethylene signaling of pathogen response. Part of a repressor complex including APETALA2 (AP2) and TOPLESS (TPL) that control the expression domains of numerous floral organ identity genes. Involved in negative regulation of salinity stress response. Represses the expression of stress tolerance-related genes, genes coding for late embryogenesis abundant (LEA) proteins that prevent protein aggregation, and positive regulators of abscisic acid (ABA) signaling, such as ABI5 and NAC019. In Arabidopsis thaliana (Mouse-ear cress), this protein is Histone deacetylase 19.